We begin with the raw amino-acid sequence, 107 residues long: MNIHVTDAAKQALQQAFDANPGKKAQLRYDAEGCGCAVSGVPTIWLAEELTGQCEQLETNGIPLYIQSSQKVFFDDQMTIDYNEKAKTLALKSPAEMLSPRMSILVK.

This is an uncharacterized protein from Bacillus subtilis (strain 168).